The following is a 392-amino-acid chain: tRNA-specific 2-thiouridylase MnmA (392 aa).

ATP is bound by residues 18–25 (GMSGGVDS) and M44. The interaction with target base in tRNA stretch occupies residues 104-106 (NPD). C109 serves as the catalytic Nucleophile. Cysteines 109 and 208 form a disulfide. G133 is a binding site for ATP. The tract at residues 158–160 (KDQ) is interaction with tRNA. C208 functions as the Cysteine persulfide intermediate in the catalytic mechanism. The tract at residues 320–321 (RY) is interaction with tRNA.

It belongs to the MnmA/TRMU family.

The protein localises to the cytoplasm. It carries out the reaction S-sulfanyl-L-cysteinyl-[protein] + uridine(34) in tRNA + AH2 + ATP = 2-thiouridine(34) in tRNA + L-cysteinyl-[protein] + A + AMP + diphosphate + H(+). In terms of biological role, catalyzes the 2-thiolation of uridine at the wobble position (U34) of tRNA, leading to the formation of s(2)U34. The polypeptide is tRNA-specific 2-thiouridylase MnmA (Marinobacter nauticus (strain ATCC 700491 / DSM 11845 / VT8) (Marinobacter aquaeolei)).